Consider the following 353-residue polypeptide: Dihydroorotate dehydrogenase (quinone) (353 aa).

FMN contacts are provided by residues 66–70 (AGFDK) and Thr-90. Lys-70 serves as a coordination point for substrate. 115–119 (NRMGF) is a substrate binding site. 2 residues coordinate FMN: Asn-143 and Asn-176. Asn-176 serves as a coordination point for substrate. Catalysis depends on Ser-179, which acts as the Nucleophile. Residue Asn-181 participates in substrate binding. Positions 212 and 240 each coordinate FMN. 241 to 242 (NT) provides a ligand contact to substrate. FMN contacts are provided by residues Gly-264, Gly-293, and 314–315 (YT).

Belongs to the dihydroorotate dehydrogenase family. Type 2 subfamily. In terms of assembly, monomer. Requires FMN as cofactor.

The protein localises to the cell membrane. The catalysed reaction is (S)-dihydroorotate + a quinone = orotate + a quinol. Its pathway is pyrimidine metabolism; UMP biosynthesis via de novo pathway; orotate from (S)-dihydroorotate (quinone route): step 1/1. In terms of biological role, catalyzes the conversion of dihydroorotate to orotate with quinone as electron acceptor. In Mycolicibacterium vanbaalenii (strain DSM 7251 / JCM 13017 / BCRC 16820 / KCTC 9966 / NRRL B-24157 / PYR-1) (Mycobacterium vanbaalenii), this protein is Dihydroorotate dehydrogenase (quinone).